Reading from the N-terminus, the 364-residue chain is Very-long-chain (3R)-3-hydroxyacyl-CoA dehydratase 3 (364 aa).

The Cytoplasmic portion of the chain corresponds to 1-151; that stretch reads MAMENQVLTP…ETLTNLRKGY (151 aa). A CS domain is found at 7-96; sequence VLTPHVYWAQ…KVSQWWERLT (90 aa). Thr9 is subject to Phosphothreonine. A coiled-coil region spans residues 113–138; it reads LDESDAEMELRAKEEERLNKLRLESE. Phosphoserine is present on residues Ser116 and Ser137. Residues 152 to 172 traverse the membrane as a helical segment; it reads LFMYNLVQFLGFSWIFVNLTV. Over 173–191 the chain is Lumenal; the sequence is RFCILGKESFYDTFHTVAD. Residues 192–212 traverse the membrane as a helical segment; that stretch reads MMYFCQMLAVVETINAAIGVT. Residues 213–214 lie on the Cytoplasmic side of the membrane; that stretch reads TS. The chain crosses the membrane as a helical span at residues 215–235; the sequence is PVLPSLIQLLGRNFILFIIFG. Residues 236 to 244 lie on the Lumenal side of the membrane; that stretch reads TMEEMQNKA. A helical membrane pass occupies residues 245–265; it reads VVFFVFYLWSAIEIFRYSFYM. Residues 266-282 are Cytoplasmic-facing; sequence LTCIDMDWEVLTWLRYT. A helical membrane pass occupies residues 283-303; the sequence is LWIPLYPLGCLAEAVSVVQSI. Active-site residues include Tyr288 and Glu295. Residues 304 to 324 are Lumenal-facing; it reads PIFNETGRFSFTLPYPVKIKV. The helical transmembrane segment at 325–345 threads the bilayer; sequence RFSFFLQIYLIMIFLGLYINF. At 346 to 364 the chain is on the cytoplasmic side; the sequence is RHLYKQRRRRYGQKKKKIH.

This sequence belongs to the very long-chain fatty acids dehydratase HACD family. As to quaternary structure, may interact with enzymes of the ELO family (including ELOVL1); with those enzymes that mediate condensation, the first of the four steps of the reaction cycle responsible for fatty acids elongation, may be part of a larger fatty acids elongase complex. Interacts with RAC1.

It is found in the endoplasmic reticulum membrane. The catalysed reaction is a very-long-chain (3R)-3-hydroxyacyl-CoA = a very-long-chain (2E)-enoyl-CoA + H2O. It catalyses the reaction (3R)-hydroxyhexadecanoyl-CoA = (2E)-hexadecenoyl-CoA + H2O. It participates in lipid metabolism; fatty acid biosynthesis. Catalyzes the third of the four reactions of the long-chain fatty acids elongation cycle. This endoplasmic reticulum-bound enzymatic process, allows the addition of two carbons to the chain of long- and very long-chain fatty acids/VLCFAs per cycle. This enzyme catalyzes the dehydration of the 3-hydroxyacyl-CoA intermediate into trans-2,3-enoyl-CoA, within each cycle of fatty acid elongation. Thereby, it participates in the production of VLCFAs of different chain lengths that are involved in multiple biological processes as precursors of membrane lipids and lipid mediators. Involved in Rac1-signaling pathways leading to the modulation of gene expression. This Pongo abelii (Sumatran orangutan) protein is Very-long-chain (3R)-3-hydroxyacyl-CoA dehydratase 3.